Reading from the N-terminus, the 339-residue chain is Ketol-acid reductoisomerase (NADP(+)) (339 aa).

One can recognise a KARI N-terminal Rossmann domain in the interval 1–182 (MRVYYDRDAD…GGGRAGIIET (182 aa)). Residues 24-27 (YGSQ), Arg-48, Ser-51, Thr-53, and 83-86 (DELQ) contribute to the NADP(+) site. Residue His-108 is part of the active site. Residue Gly-134 coordinates NADP(+). The KARI C-terminal knotted domain occupies 183–328 (TFREECETDL…ARLREMMPWI (146 aa)). Mg(2+) is bound by residues Asp-191, Glu-195, Glu-227, and Glu-231. Ser-252 contributes to the substrate binding site.

It belongs to the ketol-acid reductoisomerase family. The cofactor is Mg(2+).

It carries out the reaction (2R)-2,3-dihydroxy-3-methylbutanoate + NADP(+) = (2S)-2-acetolactate + NADPH + H(+). The enzyme catalyses (2R,3R)-2,3-dihydroxy-3-methylpentanoate + NADP(+) = (S)-2-ethyl-2-hydroxy-3-oxobutanoate + NADPH + H(+). It participates in amino-acid biosynthesis; L-isoleucine biosynthesis; L-isoleucine from 2-oxobutanoate: step 2/4. The protein operates within amino-acid biosynthesis; L-valine biosynthesis; L-valine from pyruvate: step 2/4. Involved in the biosynthesis of branched-chain amino acids (BCAA). Catalyzes an alkyl-migration followed by a ketol-acid reduction of (S)-2-acetolactate (S2AL) to yield (R)-2,3-dihydroxy-isovalerate. In the isomerase reaction, S2AL is rearranged via a Mg-dependent methyl migration to produce 3-hydroxy-3-methyl-2-ketobutyrate (HMKB). In the reductase reaction, this 2-ketoacid undergoes a metal-dependent reduction by NADPH to yield (R)-2,3-dihydroxy-isovalerate. The sequence is that of Ketol-acid reductoisomerase (NADP(+)) from Parvibaculum lavamentivorans (strain DS-1 / DSM 13023 / NCIMB 13966).